The primary structure comprises 674 residues: MESSPSSPQPTQSDPLAVFPQRTLEPADIAVLVLYFLFVLAVGLWSTVKTRRDTVKGYFLAGGDMVWWPVGASLFASNVGSGHFVGLAGSGAAAGLSVTAYEFNGIFSVLMLAWIFLPIYIAGQVTTMPEYLRKRFGGSRIPITLAVLYLFIYIFTKISVDMYAGAIFIQQSLHLNLYLAIVGLLAITALYTIAGGLAAVIYTDALQTLIMLIGALTLMGYSFAAVGGMEGLKEKYFLALASNRSGNSSCGLPREDAFHIFRDPLTSDLPWPGILFGMSIPSLWYWCTDQVIVQRTLAAKNLSHAKGGSLMAAYLKVLPLFIMVFPGMVSRVLFPDQVACADPEICQKVCSNPAGCSDIAYPKLVLELLPMGLRGLMMAVMVAALMSSLTSIFNSASTIFTMDLWNHLRPRASERELMIVGRVFVLLLVLVSILWIPVVQASQGGQLFIYIQSISSYLQPPVAVVFIMGCFWKRTNEKGAFSGLILGLLLGLVRLVLDFIYPQPRCDQPDERPAVVRDVHYLYFSMILSSVTLVTVSTVSWCTAPPTQEMVSRLTWFTRHDPIVLKEQVPSATPVPVTVSQNGTPEASSTNIQFEIVQENTSKTHSCDMTKKQSKVVKTILWLCGMESKGKEEPPSRADPVIVSLEEIPLVKTLLDINLIVCISCAIFLWGYFA.

The Extracellular portion of the chain corresponds to 1-27 (MESSPSSPQPTQSDPLAVFPQRTLEPA). A helical membrane pass occupies residues 28 to 48 (DIAVLVLYFLFVLAVGLWSTV). Topologically, residues 49–56 (KTRRDTVK) are cytoplasmic. The helical transmembrane segment at 57–77 (GYFLAGGDMVWWPVGASLFAS) threads the bilayer. At 78–102 (NVGSGHFVGLAGSGAAAGLSVTAYE) the chain is on the extracellular side. Residues 103–123 (FNGIFSVLMLAWIFLPIYIAG) traverse the membrane as a helical segment. Residues 124–140 (QVTTMPEYLRKRFGGSR) are Cytoplasmic-facing. The chain crosses the membrane as a helical span at residues 141 to 161 (IPITLAVLYLFIYIFTKISVD). The Extracellular portion of the chain corresponds to 162-180 (MYAGAIFIQQSLHLNLYLA). The chain crosses the membrane as a helical span at residues 181 to 201 (IVGLLAITALYTIAGGLAAVI). The Cytoplasmic portion of the chain corresponds to 202 to 208 (YTDALQT). The helical transmembrane segment at 209-229 (LIMLIGALTLMGYSFAAVGGM) threads the bilayer. Over 230 to 272 (EGLKEKYFLALASNRSGNSSCGLPREDAFHIFRDPLTSDLPWP) the chain is Extracellular. Residues 273-293 (GILFGMSIPSLWYWCTDQVIV) form a helical membrane-spanning segment. The Cytoplasmic portion of the chain corresponds to 294 to 308 (QRTLAAKNLSHAKGG). Residues 309 to 329 (SLMAAYLKVLPLFIMVFPGMV) form a helical membrane-spanning segment. Residues 330–374 (SRVLFPDQVACADPEICQKVCSNPAGCSDIAYPKLVLELLPMGLR) lie on the Extracellular side of the membrane. The chain crosses the membrane as a helical span at residues 375–397 (GLMMAVMVAALMSSLTSIFNSAS). The Cytoplasmic portion of the chain corresponds to 398–418 (TIFTMDLWNHLRPRASERELM). Residues 419 to 439 (IVGRVFVLLLVLVSILWIPVV) traverse the membrane as a helical segment. The Extracellular portion of the chain corresponds to 440–446 (QASQGGQ). Residues 447–467 (LFIYIQSISSYLQPPVAVVFI) form a helical membrane-spanning segment. Residues 468–479 (MGCFWKRTNEKG) are Cytoplasmic-facing. Residues 480–500 (AFSGLILGLLLGLVRLVLDFI) traverse the membrane as a helical segment. Topologically, residues 501–518 (YPQPRCDQPDERPAVVRD) are extracellular. Residues 519 to 539 (VHYLYFSMILSSVTLVTVSTV) form a helical membrane-spanning segment. Residues 540–653 (SWCTAPPTQE…SLEEIPLVKT (114 aa)) are Cytoplasmic-facing. A helical membrane pass occupies residues 654-674 (LLDINLIVCISCAIFLWGYFA).

This sequence belongs to the sodium:solute symporter (SSF) (TC 2.A.21) family.

The protein localises to the membrane. Its subcellular location is the apical cell membrane. The enzyme catalyses myo-inositol(out) + 2 Na(+)(out) = myo-inositol(in) + 2 Na(+)(in). It catalyses the reaction 1D-chiro-inositol(out) + 2 Na(+)(out) = 1D-chiro-inositol(in) + 2 Na(+)(in). The catalysed reaction is D-glucose(out) + 2 Na(+)(out) = D-glucose(in) + 2 Na(+)(in). It carries out the reaction D-xylose(out) + 2 Na(+)(out) = D-xylose(in) + 2 Na(+)(in). With respect to regulation, MI transport activity inhibited by D-chiro-inositol (DCI), phlorizin (Pz) and sodium (Na(+)). Insulin increases D-chiro-inositol uptake. Functionally, involved in the sodium-dependent cotransport of myo-inositol (MI) with a Na(+):MI stoichiometry of 2:1. Exclusively responsible for apical MI transport and absorption in intestine. Can also transport D-chiro-inositol (DCI) but not L-fucose. Exhibits stereospecific cotransport of both D-glucose and D-xylose. May induce apoptosis through the TNF-alpha, PDCD1 pathway. May play a role in the regulation of MI concentration in serum, involving reabsorption in at least the proximal tubule of the kidney. The sequence is that of Sodium/myo-inositol cotransporter 2 from Sus scrofa (Pig).